A 1026-amino-acid polypeptide reads, in one-letter code: UPF0182 protein FRAAL6027 (1026 aa).

Transmembrane regions (helical) follow at residues A13 to F33, I60 to L80, Y108 to A128, F167 to H187, A208 to D228, A250 to I270, and L283 to I303. Low complexity predominate over residues A877–T888. Disordered stretches follow at residues A877 to A916 and L958 to G1026. The segment covering T889 to G903 has biased composition (gly residues). A compositionally biased stretch (low complexity) spans P970–G1001. The segment covering P1016 to G1026 has biased composition (pro residues).

It belongs to the UPF0182 family.

It localises to the cell membrane. This chain is UPF0182 protein FRAAL6027, found in Frankia alni (strain DSM 45986 / CECT 9034 / ACN14a).